The primary structure comprises 415 residues: tRNA(Ile2) 2-agmatinylcytidine synthetase TiaS (415 aa).

It belongs to the TiaS family.

It is found in the cytoplasm. It catalyses the reaction cytidine(34) in tRNA(Ile2) + agmatine + ATP + H2O = 2-agmatinylcytidine(34) in tRNA(Ile2) + AMP + 2 phosphate + 2 H(+). ATP-dependent agmatine transferase that catalyzes the formation of 2-agmatinylcytidine (agm2C) at the wobble position (C34) of tRNA(Ile2), converting the codon specificity from AUG to AUA. The polypeptide is tRNA(Ile2) 2-agmatinylcytidine synthetase TiaS (Pyrobaculum neutrophilum (strain DSM 2338 / JCM 9278 / NBRC 100436 / V24Sta) (Thermoproteus neutrophilus)).